A 390-amino-acid chain; its full sequence is Transforming growth factor beta-1 proprotein (390 aa).

The signal sequence occupies residues 1-29; that stretch reads MPPSGLRLLPLLLPLLWLLVLTPGRPAAG. The segment at 30-74 is straightjacket domain; sequence LSTCKTIDMELVKRKRIEAIRGQILSKLRLASPPSQGDVPPGPLP. Positions 75 to 271 are arm domain; sequence EAVLALYNST…ATPLERAQHL (197 aa). 3 N-linked (GlcNAc...) asparagine glycosylation sites follow: Asn-82, Asn-136, and Asn-176. Positions 226–252 are bowtie tail; that stretch reads DSKDNTLHVEINGFNSGRRGDLATIHG. Positions 244-246 match the Cell attachment site motif; that stretch reads RGD. 4 disulfides stabilise this stretch: Cys-285–Cys-294, Cys-293–Cys-356, Cys-322–Cys-387, and Cys-326–Cys-389.

This sequence belongs to the TGF-beta family. In terms of assembly, homodimer; disulfide-linked. Interacts with the serine proteases, HTRA1 and HTRA3: the interaction with either inhibits TGFB1-mediated signaling and the HTRA protease activity is required for this inhibition. May interact with THSD4; this interaction may lead to sequestration by FBN1 microfibril assembly and attenuation of TGFB signaling. Interacts with CD109, DPT and ASPN. Interacts with EFEMP2. Interacts with TSKU; the interaction contributes to regulation of the hair cycle. Interacts with TGFBR3. Homodimer; disulfide-linked. Interacts with transforming growth factor beta-1 (TGF-beta-1) chain; interaction is non-covalent and maintains TGF-beta-1 in a latent state; each latency-associated peptide (LAP) monomer interacts with TGF-beta-1 in the other monomer. Interacts with LTBP1; leading to regulation of TGF-beta-1 activation. Interacts with LRRC32/GARP; leading to regulation of TGF-beta-1 activation on the surface of activated regulatory T-cells (Tregs). Interacts with LRRC33/NRROS; leading to regulation of TGF-beta-1 activation in macrophages and microglia. Interacts (via cell attachment site) with integrins ITGAV and ITGB6 (ITGAV:ITGB6), leading to release of the active TGF-beta-1. Interacts with NREP; the interaction results in a decrease in TGFB1 autoinduction. Interacts with HSP90AB1; inhibits latent TGFB1 activation. As to quaternary structure, homodimer; disulfide-linked. Interacts with TGF-beta receptors (TGFBR1 and TGFBR2), leading to signal transduction. In terms of processing, transforming growth factor beta-1 proprotein: The precursor proprotein is cleaved in the Golgi apparatus by FURIN to form Transforming growth factor beta-1 (TGF-beta-1) and Latency-associated peptide (LAP) chains, which remain non-covalently linked, rendering TGF-beta-1 inactive. N-glycosylated. Deglycosylation leads to activation of Transforming growth factor beta-1 (TGF-beta-1); mechanisms triggering deglycosylation-driven activation of TGF-beta-1 are however unclear.

Its subcellular location is the secreted. It is found in the extracellular space. The protein localises to the extracellular matrix. Transforming growth factor beta-1 proprotein: Precursor of the Latency-associated peptide (LAP) and Transforming growth factor beta-1 (TGF-beta-1) chains, which constitute the regulatory and active subunit of TGF-beta-1, respectively. In terms of biological role, required to maintain the Transforming growth factor beta-1 (TGF-beta-1) chain in a latent state during storage in extracellular matrix. Associates non-covalently with TGF-beta-1 and regulates its activation via interaction with 'milieu molecules', such as LTBP1, LRRC32/GARP and LRRC33/NRROS, that control activation of TGF-beta-1. Interaction with LRRC33/NRROS regulates activation of TGF-beta-1 in macrophages and microglia. Interaction with LRRC32/GARP controls activation of TGF-beta-1 on the surface of activated regulatory T-cells (Tregs). Interaction with integrins (ITGAV:ITGB6 or ITGAV:ITGB8) results in distortion of the Latency-associated peptide chain and subsequent release of the active TGF-beta-1. Its function is as follows. Multifunctional protein that regulates the growth and differentiation of various cell types and is involved in various processes, such as normal development, immune function, microglia function and responses to neurodegeneration. Activation into mature form follows different steps: following cleavage of the proprotein in the Golgi apparatus, Latency-associated peptide (LAP) and Transforming growth factor beta-1 (TGF-beta-1) chains remain non-covalently linked rendering TGF-beta-1 inactive during storage in extracellular matrix. At the same time, LAP chain interacts with 'milieu molecules', such as LTBP1, LRRC32/GARP and LRRC33/NRROS that control activation of TGF-beta-1 and maintain it in a latent state during storage in extracellular milieus. TGF-beta-1 is released from LAP by integrins (ITGAV:ITGB6 or ITGAV:ITGB8): integrin-binding to LAP stabilizes an alternative conformation of the LAP bowtie tail and results in distortion of the LAP chain and subsequent release of the active TGF-beta-1. Once activated following release of LAP, TGF-beta-1 acts by binding to TGF-beta receptors (TGFBR1 and TGFBR2), which transduce signal. While expressed by many cells types, TGF-beta-1 only has a very localized range of action within cell environment thanks to fine regulation of its activation by Latency-associated peptide chain (LAP) and 'milieu molecules'. Plays an important role in bone remodeling: acts as a potent stimulator of osteoblastic bone formation, causing chemotaxis, proliferation and differentiation in committed osteoblasts. Can promote either T-helper 17 cells (Th17) or regulatory T-cells (Treg) lineage differentiation in a concentration-dependent manner. At high concentrations, leads to FOXP3-mediated suppression of RORC and down-regulation of IL-17 expression, favoring Treg cell development. At low concentrations in concert with IL-6 and IL-21, leads to expression of the IL-17 and IL-23 receptors, favoring differentiation to Th17 cells. Stimulates sustained production of collagen through the activation of CREB3L1 by regulated intramembrane proteolysis (RIP). Mediates SMAD2/3 activation by inducing its phosphorylation and subsequent translocation to the nucleus. Positively regulates odontoblastic differentiation in dental papilla cells, via promotion of IPO7-mediated translocation of phosphorylated SMAD2 to the nucleus and subsequent transcription of target genes. Can induce epithelial-to-mesenchymal transition (EMT) and cell migration in various cell types. This Sus scrofa (Pig) protein is Transforming growth factor beta-1 proprotein (TGFB1).